Consider the following 1399-residue polypeptide: DNA-directed RNA polymerase subunit beta' (1399 aa).

Zn(2+) contacts are provided by Cys-71, Cys-73, Cys-86, and Cys-89. Mg(2+) is bound by residues Asp-462, Asp-464, and Asp-466. The Zn(2+) site is built by Cys-810, Cys-884, Cys-891, and Cys-894. Residues 1379-1399 form a disordered region; that stretch reads KQAAIVPSQPEPQPLALPPAE. Positions 1387 to 1399 are enriched in pro residues; that stretch reads QPEPQPLALPPAE.

It belongs to the RNA polymerase beta' chain family. As to quaternary structure, the RNAP catalytic core consists of 2 alpha, 1 beta, 1 beta' and 1 omega subunit. When a sigma factor is associated with the core the holoenzyme is formed, which can initiate transcription. Mg(2+) is required as a cofactor. Zn(2+) serves as cofactor.

The catalysed reaction is RNA(n) + a ribonucleoside 5'-triphosphate = RNA(n+1) + diphosphate. Its function is as follows. DNA-dependent RNA polymerase catalyzes the transcription of DNA into RNA using the four ribonucleoside triphosphates as substrates. The polypeptide is DNA-directed RNA polymerase subunit beta' (Bradyrhizobium sp. (strain BTAi1 / ATCC BAA-1182)).